We begin with the raw amino-acid sequence, 88 residues long: Small ribosomal subunit protein bS16 (88 aa).

Belongs to the bacterial ribosomal protein bS16 family.

This chain is Small ribosomal subunit protein bS16, found in Geobacter sulfurreducens (strain ATCC 51573 / DSM 12127 / PCA).